We begin with the raw amino-acid sequence, 412 residues long: 2-methylacyl-CoA dehydrogenase, mitochondrial (412 aa).

A mitochondrion-targeting transit peptide spans 1 to 25 (MHKLFAVRSLSSAIVKSFKSLQNQQ). Residues 154–163 (LAMSEPNAGS) and 187–189 (WCT) contribute to the FAD site. Serine 163 provides a ligand contact to substrate. Residues 209–210 (SK), tyrosine 264, and 271–274 (DLER) contribute to the substrate site. Glutamate 273 acts as the Proton acceptor in catalysis. FAD contacts are provided by residues arginine 299, glutamine 310, and 367–371 (QCLGG). 394 to 395 (AG) lines the substrate pocket. FAD is bound at residue 396–398 (TSE).

Belongs to the acyl-CoA dehydrogenase family. Homotetramer. It depends on FAD as a cofactor. In terms of tissue distribution, expressed in flowers.

It is found in the mitochondrion. It carries out the reaction 2-methylbutanoyl-CoA + oxidized [electron-transfer flavoprotein] + H(+) = (2E)-2-methylbut-2-enoyl-CoA + reduced [electron-transfer flavoprotein]. Functionally, short/branched-chain acyl-CoA dehydrogenase (SBCAD). Uses 2-methylbutanoyl-CoA as substrate. Minor activity with the straight-chain substrates, butanoyl-CoA, valeryl-CoA, hexanoyl-CoA, and octanoyl-CoA but no activity with isovaleryl-CoA. This Solanum tuberosum (Potato) protein is 2-methylacyl-CoA dehydrogenase, mitochondrial (2MBCD).